The sequence spans 641 residues: Probable serine protease FE772_23065 (641 aa).

The helical transmembrane segment at 532 to 552 (WVELIAILAAAGWIRVMLIGL) threads the bilayer.

The protein belongs to the peptidase S1 family.

It is found in the cell inner membrane. Its function is as follows. Possibly a dedicated protease for substrate gasdermin bGSDM; cleaves the bGSDM precursor, releasing the pore-forming moiety, which integrates into the membrane and triggers cell death. Involved in defense against bacteriophages. When this probable 4 gene operon (bGSDM-FE772_23060-FE772_23065-FE772_23070) is inserted into E.coli it provides nearly 100-fold protection against phages T5 and T6 and about 8-fold against phage T4. The operon without bGSDM no longer protects against phage. This is Probable serine protease FE772_23065 from Lysobacter enzymogenes.